Here is a 635-residue protein sequence, read N- to C-terminus: Capsid protein (635 aa).

A disordered region spans residues K571–A608. Over residues P573 to E584 the composition is skewed to basic and acidic residues. Residues T585–D597 show a composition bias toward low complexity.

The protein belongs to the anelloviridae capsid protein family.

The protein resides in the virion. In terms of biological role, self-assembles to form an icosahedral capsid with a T=1 symmetry, about 30 nm in diameter, and consisting of 60 capsid proteins. The capsid encapsulates the genomic DNA. Capsid protein is involved in attachment and entry into the host cell. This chain is Capsid protein, found in Torque teno sus virus 1 (isolate Sd-TTV31).